Consider the following 173-residue polypeptide: Superoxide dismutase [Cu-Zn] (173 aa).

The first 22 residues, 1–22 (MNKAKTLLFTALAFGLSHQALA), serve as a signal peptide directing secretion. Residues histidine 67, histidine 69, and histidine 92 each contribute to the Cu cation site. Cysteines 74 and 169 form a disulfide. 4 residues coordinate Zn(2+): histidine 92, histidine 101, histidine 110, and aspartate 113. Position 147 (histidine 147) interacts with Cu cation.

Belongs to the Cu-Zn superoxide dismutase family. In terms of assembly, homodimer. Cu cation serves as cofactor. Requires Zn(2+) as cofactor.

The protein localises to the periplasm. The catalysed reaction is 2 superoxide + 2 H(+) = H2O2 + O2. Functionally, destroys radicals which are normally produced within the cells and which are toxic to biological systems. The sequence is that of Superoxide dismutase [Cu-Zn] (sodC) from Photobacterium leiognathi.